Reading from the N-terminus, the 524-residue chain is Acetyl-CoA hydrolase (524 aa).

CoA is bound at residue 279-283; sequence GIGNI. Residue glutamate 304 is the 5-glutamyl coenzyme A thioester intermediate of the active site. CoA is bound at residue glycine 398.

The protein belongs to the acetyl-CoA hydrolase/transferase family.

The protein localises to the cytoplasm. The catalysed reaction is acetyl-CoA + H2O = acetate + CoA + H(+). Presumably involved in regulating the intracellular acetyl-CoA pool for fatty acid and cholesterol synthesis and fatty acid oxidation. The protein is Acetyl-CoA hydrolase (ACH1) of Yarrowia lipolytica (strain CLIB 122 / E 150) (Yeast).